A 355-amino-acid chain; its full sequence is Cyclin-D1-binding protein 1 (355 aa).

N-acetylalanine is present on Ala-2. Interaction with TCF3 regions lie at residues 2–181 (ASST…VDLV) and 147–355 (ISCN…AVEL). An interaction with RPLP0 region spans residues 2–187 (ASSTTPVSFL…VDLVKDAHEE (186 aa)). The required for interaction with CCND1 stretch occupies residues 2–205 (ASSTTPVSFL…DPYCGLLDDS (204 aa)). A disordered region spans residues 203 to 224 (DDSEDNSDSHHNEDGVGLPSNR). Positions 235 to 355 (LITPCLALVR…KELTQRAVEL (121 aa)) are interaction with RPLP0.

This sequence belongs to the CCNDBP1 family. As to quaternary structure, interacts with CCND1 and GRAP2. May also interact with COPS5, RPLP0, SIRT6, SYF2 and TCF3. Phosphorylated.

It localises to the cytoplasm. The protein localises to the nucleus. In terms of biological role, may negatively regulate cell cycle progression. May act at least in part via inhibition of the cyclin-D1/CDK4 complex, thereby preventing phosphorylation of RB1 and blocking E2F-dependent transcription. This is Cyclin-D1-binding protein 1 (Ccndbp1) from Rattus norvegicus (Rat).